A 785-amino-acid chain; its full sequence is Protein SEY1 (785 aa).

At 1 to 690 (MTDLEVSAIQ…KRSVINSKTE (690 aa)) the chain is on the cytoplasmic side. Residues 40-266 (GLNYHIVSVF…SEDQLFNEGY (227 aa)) enclose the GB1/RHD3-type G domain. GTP is bound at residue 50 to 57 (GSQSTGKS). Residues 451–479 (PKLRELEEELSNLRTELVNKEQENIKTKI) are a coiled coil. Residues 691 to 711 (VPLYIYALLLVLGWNEFMIIL) traverse the membrane as a helical segment. Over 712-714 (RNP) the chain is Lumenal. A helical transmembrane segment spans residues 715 to 735 (LLITLLLIGLTGLYLGYKTKL). The Cytoplasmic segment spans residues 736–785 (LGPIVQVVQAMIQELQDQAKNKLRDVLVSEPEAPSQVRIGKEVDATKDED).

Belongs to the TRAFAC class dynamin-like GTPase superfamily. GB1/RHD3 GTPase family. RHD3 subfamily.

The protein localises to the endoplasmic reticulum membrane. Functionally, cooperates with the reticulon proteins and tubule-shaping DP1 family proteins to generate and maintain the structure of the tubular endoplasmic reticulum network. Has GTPase activity, which is required for its function in ER organization. The polypeptide is Protein SEY1 (Komagataella phaffii (strain GS115 / ATCC 20864) (Yeast)).